The following is a 788-amino-acid chain: E3 ubiquitin-protein ligase SspH2 (788 aa).

Residues 1–481 are interaction with host membrane and with target proteins; the sequence is MPFHIGSGCL…PGYSGPIIRF (481 aa). LRR repeat units lie at residues 223–242, 243–264, 265–282, 283–302, 303–324, 325–342, 343–364, 365–382, 383–404, 405–422, 423–445, and 446–466; these read HITT…ALPP, ELRT…PPGL, LELS…ALPS, GLCK…VLPP, GLQE…PSEL, CKLW…MLPS, YKLW…ALPS, GLKE…PSEL, KELM…MLPS, GLLS…IHLS, and SETT…QALR. The segment at 482–491 is linker; that stretch reads DMAGASAPRE. The interval 492–788 is E3 ubiquitin-protein ligase catalytic domain; sequence TRALHLAAAD…SYLNVQWRRN (297 aa). The region spanning 494-788 is the NEL domain; sequence ALHLAAADWL…SYLNVQWRRN (295 aa). Cys-580 (glycyl thioester intermediate) is an active-site residue.

It belongs to the LRR-containing bacterial E3 ligase family. Post-translationally, ubiquitinated in the presence of host E1 ubiquitin-activating enzyme UBA1, E2 ubiquitin-conjugating enzyme UBE2D2 and ubiquitin.

It is found in the secreted. The protein localises to the host cytoplasm. It localises to the host apical cell membrane. The enzyme catalyses S-ubiquitinyl-[E2 ubiquitin-conjugating enzyme]-L-cysteine + [acceptor protein]-L-lysine = [E2 ubiquitin-conjugating enzyme]-L-cysteine + N(6)-ubiquitinyl-[acceptor protein]-L-lysine.. Its activity is regulated as follows. Exists in an autoinhibited state in the absence of substrate protein, due to interactions of the leucine-rich repeat domain with the catalytic domain. Is activated upon binding to a substrate protein. Functionally, effector proteins function to alter host cell physiology and promote bacterial survival in host tissues. This protein is an E3 ubiquitin ligase that interferes with host's ubiquitination pathway. This is E3 ubiquitin-protein ligase SspH2 (sspH2) from Salmonella typhimurium (strain LT2 / SGSC1412 / ATCC 700720).